The chain runs to 172 residues: Centrin-1 (172 aa).

Residues 1-31 (MASGFKKPSAASTGQKRKVAPKPELTEDQKQ) form a disordered region. EF-hand domains are found at residues 28-63 (DQKQEVREAFDLFDVDGSGTIDAKELKVAMRALGFE), 64-99 (PRKEEMKKMISEVDREGTGKISFNDFLAVMTQKMSE), 101-136 (DTKEEILKAFRLFDDDETGKISFKNLKRVANELGEN), and 137-172 (LTDEELQEMIDEADRDGDGEVNEEEFLRIMKKTSLY). Residues aspartate 41, aspartate 43, serine 45, threonine 47, and glutamate 52 each contribute to the Ca(2+) site. Residues aspartate 150, aspartate 152, aspartate 154, glutamate 156, and glutamate 161 each coordinate Ca(2+).

This sequence belongs to the centrin family. As to quaternary structure, monomer. Interacts with CIMAP3. Interacts with USP49.

The protein resides in the cytoplasm. The protein localises to the cytoskeleton. It localises to the microtubule organizing center. It is found in the centrosome. Its subcellular location is the cell projection. The protein resides in the cilium. Plays a fundamental role in microtubule-organizing center structure and function. Plays a role in sperm cilia formation. This is Centrin-1 from Homo sapiens (Human).